Here is a 266-residue protein sequence, read N- to C-terminus: Glutamate racemase (266 aa).

Substrate contacts are provided by residues 9 to 10 and 41 to 42; these read DS and YG. Catalysis depends on C72, which acts as the Proton donor/acceptor. 73–74 is a substrate binding site; sequence NT. The active-site Proton donor/acceptor is C184. 185–186 serves as a coordination point for substrate; it reads TH.

This sequence belongs to the aspartate/glutamate racemases family.

The catalysed reaction is L-glutamate = D-glutamate. It participates in cell wall biogenesis; peptidoglycan biosynthesis. Provides the (R)-glutamate required for cell wall biosynthesis. The sequence is that of Glutamate racemase from Staphylococcus haemolyticus.